The primary structure comprises 329 residues: Peroxidase 50 (329 aa).

Residues 1–25 form the signal peptide; that stretch reads MVVVNKTNLLLLLLSLCLTLDLSSA. 4 disulfide bridges follow: Cys36–Cys119, Cys69–Cys74, Cys125–Cys325, and Cys204–Cys236. His67 (proton acceptor) is an active-site residue. 5 residues coordinate Ca(2+): Asp68, Val71, Gly73, Asp75, and Ser77. Residue Pro167 coordinates substrate. His197 is a heme b binding site. Ca(2+) is bound at residue Thr198. Asn215 is a glycosylation site (N-linked (GlcNAc...) asparagine). Positions 249, 252, and 257 each coordinate Ca(2+).

This sequence belongs to the peroxidase family. Classical plant (class III) peroxidase subfamily. Heme b is required as a cofactor. Requires Ca(2+) as cofactor. As to expression, expressed in roots and leaves.

Its subcellular location is the secreted. The catalysed reaction is 2 a phenolic donor + H2O2 = 2 a phenolic radical donor + 2 H2O. Removal of H(2)O(2), oxidation of toxic reductants, biosynthesis and degradation of lignin, suberization, auxin catabolism, response to environmental stresses such as wounding, pathogen attack and oxidative stress. These functions might be dependent on each isozyme/isoform in each plant tissue. In terms of biological role, exhibits a Ca(2+)-pectate binding affinity which could be interpreted in vivo as a specificity to interact with the pectic structure of the cell wall. This chain is Peroxidase 50 (PER50), found in Arabidopsis thaliana (Mouse-ear cress).